The following is a 316-amino-acid chain: Glutathione synthetase (316 aa).

One can recognise an ATP-grasp domain in the interval 124-311 (NEKLAALLFP…IAGLLFDAIE (188 aa)). ATP is bound at residue 151-208 (FVLEHGQAVLKPLDGMGGRSIFRSGSGDPNLNVILETLTDGNRKLTLAQRFIPDITAG). 2 residues coordinate Mg(2+): Glu-282 and Asn-284.

This sequence belongs to the prokaryotic GSH synthase family. It depends on Mg(2+) as a cofactor. The cofactor is Mn(2+).

It catalyses the reaction gamma-L-glutamyl-L-cysteine + glycine + ATP = glutathione + ADP + phosphate + H(+). It functions in the pathway sulfur metabolism; glutathione biosynthesis; glutathione from L-cysteine and L-glutamate: step 2/2. The sequence is that of Glutathione synthetase from Xanthomonas axonopodis pv. citri (strain 306).